The following is a 664-amino-acid chain: Acid beta-fructofuranosidase 4, vacuolar (664 aa).

Residues 1 to 43 (MASSDALLPISAREEEPLCPYTRLPMADPNQETHGPRRRRPFK) lie on the Cytoplasmic side of the membrane. Residues 1–108 (MASSDALLPI…WKLSGDRNTP (108 aa)) constitute a propeptide, removed in mature form. 2 consecutive short sequence motifs (critical for endoplasmic reticulum export) follow at residues 7–8 (LL) and 9–10 (PI). A Critical for trafficking from the trans-Golgi network to the prevacuolar compartment and from the prevacuolar compartment to the central vacuole motif is present at residues 14 to 16 (EEE). Residues 44-64 (GLLAVSFGLLFIAFYVALIAT) form a helical; Signal-anchor for type II membrane protein membrane-spanning segment. The Lumenal segment spans residues 65–664 (HDGSRSNDEG…DEAVRALSRT (600 aa)). Asn113 is a glycosylation site (N-linked (GlcNAc...) asparagine). Residues 132–135 (WMND), Gln151, Trp159, 194–195 (WT), and 258–259 (RD) contribute to the substrate site. The active site involves Asp135. Asn280 is a glycosylation site (N-linked (GlcNAc...) (complex) asparagine). The substrate site is built by Glu313 and Asp346. N-linked (GlcNAc...) asparagine glycans are attached at residues Asn362 and Asn498. Residues Cys510 and Cys558 are joined by a disulfide bond.

It belongs to the glycosyl hydrolase 32 family. As to quaternary structure, may be present in two forms, a 70 kDa monomer and a heterodimer of the 30 kDa and 38 kDa subunits. The ratio of the levels of the two forms within cells appears to be regulated developmentally. As to expression, mostly expressed in stems, roots and flowers, and, to a lower extent, in mature leaves.

The protein resides in the vacuole. The protein localises to the endoplasmic reticulum membrane. Its subcellular location is the golgi apparatus membrane. It localises to the golgi apparatus. It is found in the trans-Golgi network membrane. The protein resides in the prevacuolar compartment membrane. The protein localises to the vacuole membrane. Its subcellular location is the vacuole lumen. The catalysed reaction is Hydrolysis of terminal non-reducing beta-D-fructofuranoside residues in beta-D-fructofuranosides.. Its pathway is glycan biosynthesis; sucrose metabolism. With respect to regulation, inhibited by C/VIF1 and C/VIF2. Possible role in the continued mobilization of sucrose to sink organs. Regulates root elongation. This chain is Acid beta-fructofuranosidase 4, vacuolar, found in Arabidopsis thaliana (Mouse-ear cress).